The sequence spans 582 residues: Kelch-like protein diablo (582 aa).

The tract at residues 1–22 (MGDVLISDRPPSPARLSHTSEK) is disordered. A BTB domain is found at 41 to 108 (CDVVINVSGR…CYTSHIVVEE (68 aa)). The region spanning 143 to 245 (CLGIRAFADT…SPKFLVGTVG (103 aa)) is the BACK domain. 6 Kelch repeats span residues 292 to 338 (VLFA…VLND), 340 to 386 (LYAV…VLDG), 387 to 433 (FLYA…VLGG), 435 to 480 (LYAI…VFNN), 482 to 527 (IYAV…VVNG), and 528 to 574 (QLYA…VMRA).

It functions in the pathway protein modification; protein ubiquitination. Probable substrate-specific adapter of an E3 ubiquitin-protein ligase complex which mediates the ubiquitination and subsequent proteasomal degradation of target proteins. May have a role in synapse differentiation and growth. The polypeptide is Kelch-like protein diablo (Culex quinquefasciatus (Southern house mosquito)).